Consider the following 1086-residue polypeptide: NAD(P) transhydrogenase, mitochondrial (1086 aa).

The N-terminal 43 residues, 1-43 (MAHLLKTVVAGCSCPFLSNLGSSKVLPGKRDFVRTLRTHQALW), are a transit peptide targeting the mitochondrion. Residues 44–474 (CKSPVKPGIP…TVSMYTKTLT (431 aa)) lie on the Mitochondrial matrix side of the membrane. K70 carries the N6-acetyllysine modification. Position 117 is an N6-succinyllysine (K117). 182–184 (RVT) contributes to the NAD(+) binding site. Residue K224 is modified to N6-succinyllysine. NAD(+) is bound by residues V237, 257 to 259 (DTR), and G287. K294 carries the N6-succinyllysine modification. The NAD(+) site is built by E300 and L319. K331 carries the post-translational modification N6-succinyllysine. Position 397 is an N6-acetyllysine (K397). 4 consecutive transmembrane segments (helical) span residues 475–493 (TASV…GIVA), 501–521 (MVTT…GVTP), 527–546 (LMSV…LALM), and 558–578 (SLAA…FLVT). Residues 579–595 (QRMLDMFKRPTDPPEYN) are Mitochondrial matrix-facing. The next 5 helical transmembrane spans lie at 596–616 (YLYL…LYGG), 622–642 (IMYL…STQG), 646–666 (LGNA…LGGL), 672–691 (LLAQ…LTIA), and 702–722 (LVAA…MAEY). Topologically, residues 723–739 (IVEYPHFAMDATSNFTK) are cytoplasmic. Transmembrane regions (helical) follow at residues 740–760 (IVAY…LVAY), 778–797 (HALN…PFMA), 801–819 (FTTG…TLMG), 833–853 (VVIT…GFLL), and 857–879 (LLTI…MCVA). At 880–1086 (MNRSLANVIL…QAKVRESYQK (207 aa)) the chain is on the mitochondrial matrix side. NADP(+)-binding positions include Y933, 965-970 (VAGRMP), 1007-1011 (GANDT), 1026-1027 (GM), 1042-1049 (KRSLGVGY), and 1068-1069 (DA). An N6-succinyllysine modification is found at K1079.

It in the N-terminal section; belongs to the AlaDH/PNT family. The protein in the C-terminal section; belongs to the PNT beta subunit family. In terms of assembly, homodimer. Widely expressed with expression most readily detectable in adrenal, heart, kidney, thyroid and adipose tissues.

The protein localises to the mitochondrion inner membrane. It carries out the reaction NAD(+) + NADPH + H(+)(in) = NADH + NADP(+) + H(+)(out). In terms of biological role, the transhydrogenation between NADH and NADP is coupled to respiration and ATP hydrolysis and functions as a proton pump across the membrane. May play a role in reactive oxygen species (ROS) detoxification in the adrenal gland. In Mus musculus (Mouse), this protein is NAD(P) transhydrogenase, mitochondrial (Nnt).